Consider the following 103-residue polypeptide: Large ribosomal subunit protein bL21 (103 aa).

Belongs to the bacterial ribosomal protein bL21 family. As to quaternary structure, part of the 50S ribosomal subunit. Contacts protein L20.

In terms of biological role, this protein binds to 23S rRNA in the presence of protein L20. The polypeptide is Large ribosomal subunit protein bL21 (Ralstonia pickettii (strain 12J)).